We begin with the raw amino-acid sequence, 559 residues long: Sesquiterpene synthase TPS3 (559 aa).

Residues Arg275, Asp312, Asp316, Arg453, and Asp456 each contribute to the (2E,6E)-farnesyl diphosphate site. Asp312 and Asp316 together coordinate Mg(2+). The DDXXD motif motif lies at Asp312–Asp316. Mg(2+) is bound by residues Asp456, Thr460, and Glu464.

It belongs to the terpene synthase family. Tpsa subfamily. Monomer. The cofactor is Mg(2+). Highly expressed in glandular trichomes. Expressed in roots and leaves.

It localises to the cytoplasm. The catalysed reaction is (2E,6E)-farnesyl diphosphate = (+)-(R)-germacrene A + diphosphate. The protein operates within secondary metabolite biosynthesis; terpenoid biosynthesis. In terms of biological role, sesquiterpene synthase involved in the biosynthesis of volatile compounds. Mediates the conversion of (2E,6E)-farnesyl diphosphate (FPP) into (+)-(R)-germacrene A. In Xanthium strumarium (Rough cocklebur), this protein is Sesquiterpene synthase TPS3.